Reading from the N-terminus, the 394-residue chain is Elongation factor Tu (394 aa).

In terms of domain architecture, tr-type G spans 10–204 (KLHINVGTIG…VLDSYIPEPK (195 aa)). A G1 region spans residues 19–26 (GHVDHGKT). GTP is bound at residue 19 to 26 (GHVDHGKT). Thr-26 contributes to the Mg(2+) binding site. The G2 stretch occupies residues 60-64 (GITIN). The G3 stretch occupies residues 81–84 (DCPG). GTP is bound by residues 81–85 (DCPGH) and 136–139 (NKCD). The G4 stretch occupies residues 136–139 (NKCD). A G5 region spans residues 174–176 (SAL).

This sequence belongs to the TRAFAC class translation factor GTPase superfamily. Classic translation factor GTPase family. EF-Tu/EF-1A subfamily. As to quaternary structure, monomer.

It is found in the cytoplasm. The enzyme catalyses GTP + H2O = GDP + phosphate + H(+). In terms of biological role, GTP hydrolase that promotes the GTP-dependent binding of aminoacyl-tRNA to the A-site of ribosomes during protein biosynthesis. This is Elongation factor Tu from Baumannia cicadellinicola subsp. Homalodisca coagulata.